Reading from the N-terminus, the 114-residue chain is Probable non-functional T cell receptor beta variable 5-3 (114 aa).

Positions 1–21 are cleaved as a signal peptide; that stretch reads MGPGLLCWELLYLLGAGPVEA. The Ig-like domain maps to 22–114; it reads GVTQSPTHLI…SALYLCARSL (93 aa). Cys-42 and Cys-110 are joined by a disulfide. A glycan (N-linked (GlcNAc...) asparagine) is linked at Asn-96.

As to quaternary structure, alpha-beta TR is a heterodimer composed of an alpha and beta chain; disulfide-linked. The alpha-beta TR is associated with the transmembrane signaling CD3 coreceptor proteins to form the TR-CD3 (TcR or TCR). The assembly of alpha-beta TR heterodimers with CD3 occurs in the endoplasmic reticulum where a single alpha-beta TR heterodimer associates with one CD3D-CD3E heterodimer, one CD3G-CD3E heterodimer and one CD247 homodimer forming a stable octameric structure. CD3D-CD3E and CD3G-CD3E heterodimers preferentially associate with TR alpha and TR beta chains, respectively. The association of the CD247 homodimer is the last step of TcR assembly in the endoplasmic reticulum and is required for transport to the cell surface.

The protein localises to the cell membrane. Functionally, probable non-functional open reading frame (ORF) of V region of the variable domain of T cell receptor (TR) beta chain. Non-functional ORF generally cannot participate in the synthesis of a productive T cell receptor (TR) chain due to altered V-(D)-J or switch recombination and/or splicing site (at mRNA level) and/or conserved amino acid change (protein level). Alpha-beta T cell receptors are antigen specific receptors which are essential to the immune response and are present on the cell surface of T lymphocytes. Recognize peptide-major histocompatibility (MH) (pMH) complexes that are displayed by antigen presenting cells (APC), a prerequisite for efficient T cell adaptive immunity against pathogens. Binding of alpha-beta TR to pMH complex initiates TR-CD3 clustering on the cell surface and intracellular activation of LCK that phosphorylates the ITAM motifs of CD3G, CD3D, CD3E and CD247 enabling the recruitment of ZAP70. In turn ZAP70 phosphorylates LAT, which recruits numerous signaling molecules to form the LAT signalosome. The LAT signalosome propagates signal branching to three major signaling pathways, the calcium, the mitogen-activated protein kinase (MAPK) kinase and the nuclear factor NF-kappa-B (NF-kB) pathways, leading to the mobilization of transcription factors that are critical for gene expression and essential for T cell growth and differentiation. The T cell repertoire is generated in the thymus, by V-(D)-J rearrangement. This repertoire is then shaped by intrathymic selection events to generate a peripheral T cell pool of self-MH restricted, non-autoaggressive T cells. Post-thymic interaction of alpha-beta TR with the pMH complexes shapes TR structural and functional avidity. This is Probable non-functional T cell receptor beta variable 5-3 from Homo sapiens (Human).